The sequence spans 199 residues: LPICPSGSVNCQVSLGELFDRAVKLSHYIHFLSSEMFNEFDERYAQGRGFITKAVNGCHNASLTTPEDKEQAQQIHHEDLLNLVLGVLRSWNDPLLHLVTEVQRIKEAPDTILWKAVEIEEQNKRLLEGMEKIVGRVQPGDTGNEVYSRWSGLPSLQLADEDSRLFAFYNLLHCGRRDSHKIDNYLKLLKCRLIHDSNC.

Cystine bridges form between C4/C11, C58/C174, and C191/C199. N60 carries N-linked (GlcNAc...) asparagine glycosylation.

It belongs to the somatotropin/prolactin family. Glycosylated.

Its subcellular location is the secreted. This chain is Prolactin-1, found in Alligator mississippiensis (American alligator).